We begin with the raw amino-acid sequence, 122 residues long: Large ribosomal subunit protein uL18 (122 aa).

It belongs to the universal ribosomal protein uL18 family. In terms of assembly, part of the 50S ribosomal subunit; part of the 5S rRNA/L5/L18/L25 subcomplex. Contacts the 5S and 23S rRNAs.

Its function is as follows. This is one of the proteins that bind and probably mediate the attachment of the 5S RNA into the large ribosomal subunit, where it forms part of the central protuberance. In Lachnospira eligens (strain ATCC 27750 / DSM 3376 / VPI C15-48 / C15-B4) (Eubacterium eligens), this protein is Large ribosomal subunit protein uL18.